Reading from the N-terminus, the 139-residue chain is Actin-depolymerizing factor 7 (139 aa).

Positions 7–139 constitute an ADF-H domain; it reads GMAVDDECKL…GLDVIRGRAN (133 aa).

Belongs to the actin-binding proteins ADF family.

In terms of biological role, actin-depolymerizing protein. Severs actin filaments (F-actin) and binds to actin monomers. This Oryza sativa subsp. japonica (Rice) protein is Actin-depolymerizing factor 7 (ADF7).